The sequence spans 322 residues: tRNA dimethylallyltransferase (322 aa).

An ATP-binding site is contributed by 18–25; the sequence is GPTASGKS. Residue 20 to 25 participates in substrate binding; the sequence is TASGKS. 2 interaction with substrate tRNA regions span residues 43-46 and 167-171; these read DSRQ and QRLVR.

Belongs to the IPP transferase family. In terms of assembly, monomer. It depends on Mg(2+) as a cofactor.

It carries out the reaction adenosine(37) in tRNA + dimethylallyl diphosphate = N(6)-dimethylallyladenosine(37) in tRNA + diphosphate. Functionally, catalyzes the transfer of a dimethylallyl group onto the adenine at position 37 in tRNAs that read codons beginning with uridine, leading to the formation of N6-(dimethylallyl)adenosine (i(6)A). The polypeptide is tRNA dimethylallyltransferase (Chlorobium phaeobacteroides (strain BS1)).